The following is a 101-amino-acid chain: Signal recognition particle 19 kDa protein (101 aa).

The protein belongs to the SRP19 family. Part of the signal recognition particle protein translocation system, which is composed of SRP and FtsY. Archaeal SRP consists of a 7S RNA molecule of 300 nucleotides and two protein subunits: SRP54 and SRP19.

The protein localises to the cytoplasm. Its function is as follows. Involved in targeting and insertion of nascent membrane proteins into the cytoplasmic membrane. Binds directly to 7S RNA and mediates binding of the 54 kDa subunit of the SRP. In Methanosarcina barkeri (strain Fusaro / DSM 804), this protein is Signal recognition particle 19 kDa protein.